The primary structure comprises 398 residues: Cytohesin-1 (398 aa).

Met-1 is subject to N-acetylmethionine. Positions 10–67 (SDLTAEERQELENIRRRKQELLADIQRLKDEIAEVANEIENLGSTEERKNMQRNKQVA) form a coiled coil. The region spanning 73–202 (FNMDPKKGIQ…IIMLNTSLHN (130 aa)) is the SEC7 domain. Residues 260–377 (NPDREGWLLK…WIKCIKAAIS (118 aa)) enclose the PH domain. A 1,2-diacyl-sn-glycero-3-phospho-(1D-myo-inositol-3,4,5-trisphosphate)-binding positions include 269–277 (KLGGGRVKT), Arg-281, Tyr-292, Arg-302, and Asn-351. Residues 388 to 396 (RKKKVSSTK) form a C-terminal autoinhibitory region region.

Interacts with TRIM23 and CYTIP. Interacts (via coiled-coil domain) with FRMD4A (via coiled-coil domain). Interacts with FRMD4B. Found in a complex with PARD3, CYTH1 and FRMD4A. Interacts (via N-terminal domain) with INAVA (via N-terminal domain). In terms of processing, ubiquitinated by SCF(FBXW11) E3 ubiquitin-protein ligase complex. Ubiquitination induces proteasomal degradation.

It localises to the cell membrane. Its subcellular location is the cytoplasm. The protein localises to the cytosol. It is found in the cell junction. The protein resides in the tight junction. It localises to the adherens junction. Its function is as follows. Promotes guanine-nucleotide exchange on ARF1, ARF5 and ARF6. Promotes the activation of ARF factors through replacement of GDP with GTP. Plays an important role in membrane trafficking, during junctional remodeling and epithelial polarization, through regulation of ARF6 activity. This is Cytohesin-1 (CYTH1) from Chlorocebus aethiops (Green monkey).